A 124-amino-acid polypeptide reads, in one-letter code: Small ribosomal subunit protein uS12 (124 aa).

Positions glutamine 105–glycine 124 are disordered. Residues lysine 108–glycine 118 show a composition bias toward basic residues.

This sequence belongs to the universal ribosomal protein uS12 family. As to quaternary structure, part of the 30S ribosomal subunit. Contacts proteins S8 and S17. May interact with IF1 in the 30S initiation complex.

Its function is as follows. With S4 and S5 plays an important role in translational accuracy. In terms of biological role, interacts with and stabilizes bases of the 16S rRNA that are involved in tRNA selection in the A site and with the mRNA backbone. Located at the interface of the 30S and 50S subunits, it traverses the body of the 30S subunit contacting proteins on the other side and probably holding the rRNA structure together. The combined cluster of proteins S8, S12 and S17 appears to hold together the shoulder and platform of the 30S subunit. The chain is Small ribosomal subunit protein uS12 (rpsL) from Mycobacterium bovis (strain ATCC BAA-935 / AF2122/97).